The chain runs to 1146 residues: Reverse gyrase 1 (1146 aa).

An RG N-terminal-type zinc finger spans residues 1–38; sequence MIKAIFDTLCPNCGGEISAERLLKGLPCEKCLPEEVNR. Residues Cys-10, Cys-13, Cys-28, and Cys-31 each coordinate Zn(2+). Residues Gln-79 and 96 to 103 each bind ATP; that span reads APTGVGKT. The Helicase ATP-binding domain occupies 83–240; it reads ARKVFLGRSF…RLKEKPNKSE (158 aa). A DEAD box motif is present at residues 197-200; sequence DDVD. The region spanning 412–565 is the Helicase C-terminal domain; sequence HLLWALLSLR…FKKIEEVDLK (154 aa). Positions 592-1146 are topoisomerase I; sequence EHVKPVLVVV…KVNEFEKANV (555 aa). One can recognise a Toprim domain in the interval 596 to 728; sequence PVLVVVESPN…NVERIEFHEV (133 aa). Glu-602 and Asp-697 together coordinate Mg(2+). The 399-residue stretch at 744-1142 folds into the Topo IA-type catalytic domain; the sequence is NENLVKAQLV…ELYKKVNEFE (399 aa). Tyr-891 functions as the O-(5'-phospho-DNA)-tyrosine intermediate in the catalytic mechanism.

This sequence in the N-terminal section; belongs to the DEAD box helicase family. DDVD subfamily. It in the C-terminal section; belongs to the type IA topoisomerase family. Monomer. Requires Zn(2+) as cofactor. The cofactor is Mg(2+).

It is found in the cytoplasm. The enzyme catalyses ATP + H2O = ADP + phosphate + H(+). In terms of biological role, modifies the topological state of DNA by introducing positive supercoils in an ATP-dependent process, increasing the linking number in steps of +1. Binds to single-stranded DNA, transiently cleaves and then rejoins the ends, introducing a positive supercoil in the process. The scissile phosphodiester is attacked by the catalytic tyrosine of the enzyme, resulting in the formation of a DNA-(5'-phosphotyrosyl)-enzyme intermediate. Probably involved in rewinding DNA strands in regions of the chromosome that have opened up to allow replication, transcription, DNA repair and/or for DNA protection. The chain is Reverse gyrase 1 from Aquifex aeolicus (strain VF5).